Here is a 285-residue protein sequence, read N- to C-terminus: ATP phosphoribosyltransferase (285 aa).

This sequence belongs to the ATP phosphoribosyltransferase family. Long subfamily. Mg(2+) serves as cofactor.

It is found in the cytoplasm. It catalyses the reaction 1-(5-phospho-beta-D-ribosyl)-ATP + diphosphate = 5-phospho-alpha-D-ribose 1-diphosphate + ATP. The protein operates within amino-acid biosynthesis; L-histidine biosynthesis; L-histidine from 5-phospho-alpha-D-ribose 1-diphosphate: step 1/9. Feedback inhibited by histidine. Its function is as follows. Catalyzes the condensation of ATP and 5-phosphoribose 1-diphosphate to form N'-(5'-phosphoribosyl)-ATP (PR-ATP). Has a crucial role in the pathway because the rate of histidine biosynthesis seems to be controlled primarily by regulation of HisG enzymatic activity. The protein is ATP phosphoribosyltransferase of Metallosphaera sedula (strain ATCC 51363 / DSM 5348 / JCM 9185 / NBRC 15509 / TH2).